Reading from the N-terminus, the 397-residue chain is Probable inactive purple acid phosphatase 28 (397 aa).

The signal sequence occupies residues 1 to 30 (MNCSIGNWKHTVLYLTLIVSLLYFIESLIS). 2 N-linked (GlcNAc...) asparagine glycosylation sites follow: asparagine 91 and asparagine 209. Positions 266 and 314 each coordinate Zn(2+). Residue 314-316 (HDH) participates in substrate binding. Histidine 316 is a Fe cation binding site.

The protein belongs to the metallophosphoesterase superfamily. Purple acid phosphatase family. Homodimer. The cofactor is Fe cation. Requires Zn(2+) as cofactor. As to expression, expressed in roots, stems, leaves, flowers and siliques.

The protein localises to the secreted. This is Probable inactive purple acid phosphatase 28 (PAP28) from Arabidopsis thaliana (Mouse-ear cress).